We begin with the raw amino-acid sequence, 1336 residues long: Coiled-coil and C2 domain-containing protein 2A (1336 aa).

Disordered regions lie at residues 1 to 29 (MEAALSRKTAKKKRKTHTTRGYRKREQEV) and 70 to 97 (VEDCQESDEDSGGELAEEPTDSPSQTFI). A compositionally biased stretch (basic residues) spans 8–23 (KTAKKKRKTHTTRGYR). Residues 70 to 89 (VEDCQESDEDSGGELAEEPT) show a composition bias toward acidic residues. A coiled-coil region spans residues 136-156 (LSDLSELKDSQIRMLNRYQEQ). One can recognise a C2 domain in the interval 755–915 (PREPSGWSGH…LASRTFEGCI (161 aa)).

Probable component of the tectonic-like complex (also named MKS complex), composed of B9d1, B9d2, Cc2d2a, Mks1 and tctn. As to expression, expressed in the antennae of chordotonal neurons and male germ cells (at protein level).

The protein localises to the cytoplasm. The protein resides in the cytoskeleton. Its subcellular location is the cilium basal body. It is found in the microtubule organizing center. It localises to the centrosome. The protein localises to the centriole. Functionally, probable component of the tectonic-like complex (also named MKS complex), a complex localized at the transition zone of primary cilia. Required for ciliary structure and function. The protein is Coiled-coil and C2 domain-containing protein 2A of Drosophila melanogaster (Fruit fly).